The sequence spans 632 residues: Extracellular metalloproteinase 2 (632 aa).

Positions 1-19 are cleaved as a signal peptide; sequence MHGLLLAGLAAALPLGVAG. Residues 20–244 constitute a propeptide that is removed on maturation; it reads LPARQQSGLS…VHNVVDYVAS (225 aa). A glycan (N-linked (GlcNAc...) asparagine) is linked at Asn-270. His-429 is a Zn(2+) binding site. Residue Glu-430 is part of the active site. Residue His-433 participates in Zn(2+) binding.

It belongs to the peptidase M36 family. Requires Zn(2+) as cofactor.

The protein localises to the secreted. Secreted metalloproteinase probably acting as a virulence factor. This chain is Extracellular metalloproteinase 2 (MEP2), found in Arthroderma benhamiae (Trichophyton mentagrophytes).